The sequence spans 284 residues: D-tagatose-1,6-bisphosphate aldolase subunit GatY (284 aa).

Aspartate 82 (proton donor) is an active-site residue. Zn(2+) contacts are provided by histidine 83 and histidine 180. Residue cysteine 181 participates in dihydroxyacetone phosphate binding. Histidine 208 is a Zn(2+) binding site. Residues 209–211 (GAS) and 230–233 (NVAT) contribute to the dihydroxyacetone phosphate site.

This sequence belongs to the class II fructose-bisphosphate aldolase family. TagBP aldolase GatY subfamily. As to quaternary structure, forms a complex with GatZ. Requires Zn(2+) as cofactor.

It catalyses the reaction D-tagatofuranose 1,6-bisphosphate = D-glyceraldehyde 3-phosphate + dihydroxyacetone phosphate. It participates in carbohydrate metabolism; D-tagatose 6-phosphate degradation; D-glyceraldehyde 3-phosphate and glycerone phosphate from D-tagatose 6-phosphate: step 2/2. Catalytic subunit of the tagatose-1,6-bisphosphate aldolase GatYZ, which catalyzes the reversible aldol condensation of dihydroxyacetone phosphate (DHAP or glycerone-phosphate) with glyceraldehyde 3-phosphate (G3P) to produce tagatose 1,6-bisphosphate (TBP). Requires GatZ subunit for full activity and stability. Is involved in the catabolism of galactitol. This chain is D-tagatose-1,6-bisphosphate aldolase subunit GatY, found in Salmonella paratyphi A (strain ATCC 9150 / SARB42).